Reading from the N-terminus, the 162-residue chain is MSSSNIQRPKILSTLPSIFSYLHDAKVRSKMTFADIAAEMDRDEWYVAAIFYGQAKPDQADIVKLSAALNLQQRYLDEAFGPDFFPHRGLGEFPPQDPVLYRLYEVLVVYGYPLKHMIHEKFGDGIMSAIDFEGHVEKVKGSSNEDRVKITLNGKFLPYRRW.

Residues arginine 102, glutamate 105, and serine 128 contribute to the active site.

Belongs to the cyanase family.

It catalyses the reaction cyanate + hydrogencarbonate + 3 H(+) = NH4(+) + 2 CO2. Catalyzes the reaction of cyanate with bicarbonate to produce ammonia and carbon dioxide. This chain is Cyanate hydratase, found in Mycosarcoma maydis (Corn smut fungus).